Here is a 292-residue protein sequence, read N- to C-terminus: High-affinity heme uptake system protein IsdE (292 aa).

Positions 1 to 19 (MRIIKYLTILVISVVILTS) are cleaved as a signal peptide. A lipid anchor (N-palmitoyl cysteine) is attached at Cys-20. Cys-20 is lipidated: S-diacylglycerol cysteine. The region spanning 35–291 (RIVPTTVALT…QLYDLFYKDK (257 aa)) is the Fe/B12 periplasmic-binding domain. Heme contacts are provided by Val-41, Ala-42, Ser-60, Tyr-61, Met-78, and His-229.

Belongs to the bacterial solute-binding protein 8 family. Requires heme b as cofactor.

Its subcellular location is the cell membrane. Its function is as follows. Involved in heme (porphyrin) scavenging. Binds Fe(2+) and Fe(3+) heme but the largest fraction is Fe(2+) heme. Functions as a high-affinity heme binding protein and probably has a role in relaying heme-iron from cell wall-anchored isd proteins receptors to the probable permease IsdF. The chain is High-affinity heme uptake system protein IsdE (isdE) from Staphylococcus aureus (strain MRSA252).